A 70-amino-acid chain; its full sequence is Alpha-elapitoxin-Ast2a (70 aa).

Intrachain disulfides connect Cys3–Cys20, Cys13–Cys41, Cys26–Cys30, Cys45–Cys56, and Cys57–Cys62. Serine amide is present on Ser70.

This sequence belongs to the three-finger toxin family. Long-chain subfamily. Type II alpha-neurotoxin sub-subfamily. In terms of tissue distribution, expressed by the venom gland.

It is found in the secreted. Its function is as follows. Binds with high affinity to muscular (alpha-1/CHRNA1) and neuronal (alpha-7/CHRNA7) nicotinic acetylcholine receptor (nAChR) and inhibits acetylcholine from binding to the receptor, thereby impairing neuromuscular and neuronal transmission. The sequence is that of Alpha-elapitoxin-Ast2a from Hydrophis stokesii (Stokes's sea snake).